A 1029-amino-acid chain; its full sequence is Exportin-T (1029 aa).

It belongs to the exportin family.

The protein resides in the nucleus. Its subcellular location is the cytoplasm. TRNA nucleus export receptor which facilitates tRNA translocation across the nuclear pore complex. Involved in pre-tRNA splicing, probably by affecting the interaction of pre-tRNA with splicing endonuclease. In Aspergillus clavatus (strain ATCC 1007 / CBS 513.65 / DSM 816 / NCTC 3887 / NRRL 1 / QM 1276 / 107), this protein is Exportin-T (los1).